The chain runs to 391 residues: Na(+)/H(+) antiporter NhaA 2 (391 aa).

Helical transmembrane passes span 25–45 (AGGIVLMAAALAALIVANSPL), 56–76 (VWLGLSVELWINDGLMAIFFL), 98–118 (ALPGFAALGGMLVPALIYIAI), 128–148 (GWAIPAATDIAFALGVLSLLG), 157–177 (VFLAALAILDDLGAVTIIAFF), 180–200 (SGLNLPMLAAAFVTLAVLVAL), 208–228 (LLPYLLLGALLWFFVLQSGVH), 264–284 (VAFAVVPIFGFANAGVSLSGI), 297–317 (VALGLFVGKQIGVFLAAVLAI), 335–355 (GVAILCGIGFTMSLFIGNLAF), and 364–384 (EVKVGVLIGSGLAAVAGIVLL).

Belongs to the NhaA Na(+)/H(+) (TC 2.A.33) antiporter family.

The protein resides in the cell inner membrane. It catalyses the reaction Na(+)(in) + 2 H(+)(out) = Na(+)(out) + 2 H(+)(in). Its function is as follows. Na(+)/H(+) antiporter that extrudes sodium in exchange for external protons. The protein is Na(+)/H(+) antiporter NhaA 2 of Pseudomonas syringae pv. tomato (strain ATCC BAA-871 / DC3000).